The chain runs to 444 residues: Light-independent protochlorophyllide reductase subunit N (444 aa).

[4Fe-4S] cluster-binding residues include C36, C61, and C118.

The protein belongs to the BchN/ChlN family. Protochlorophyllide reductase is composed of three subunits; BchL, BchN and BchB. Forms a heterotetramer of two BchB and two BchN subunits. [4Fe-4S] cluster serves as cofactor.

The catalysed reaction is chlorophyllide a + oxidized 2[4Fe-4S]-[ferredoxin] + 2 ADP + 2 phosphate = protochlorophyllide a + reduced 2[4Fe-4S]-[ferredoxin] + 2 ATP + 2 H2O. Its pathway is porphyrin-containing compound metabolism; bacteriochlorophyll biosynthesis (light-independent). Functionally, component of the dark-operative protochlorophyllide reductase (DPOR) that uses Mg-ATP and reduced ferredoxin to reduce ring D of protochlorophyllide (Pchlide) to form chlorophyllide a (Chlide). This reaction is light-independent. The NB-protein (BchN-BchB) is the catalytic component of the complex. In Chloroflexus aurantiacus (strain ATCC 29366 / DSM 635 / J-10-fl), this protein is Light-independent protochlorophyllide reductase subunit N.